Reading from the N-terminus, the 368-residue chain is Ribosomal RNA large subunit methyltransferase M (368 aa).

S-adenosyl-L-methionine contacts are provided by residues Ser-189, 222-225 (CPGG), Asp-241, Asp-261, and Asp-278. Lys-307 functions as the Proton acceptor in the catalytic mechanism.

Belongs to the class I-like SAM-binding methyltransferase superfamily. RNA methyltransferase RlmE family. RlmM subfamily. In terms of assembly, monomer.

The protein localises to the cytoplasm. It carries out the reaction cytidine(2498) in 23S rRNA + S-adenosyl-L-methionine = 2'-O-methylcytidine(2498) in 23S rRNA + S-adenosyl-L-homocysteine + H(+). In terms of biological role, catalyzes the 2'-O-methylation at nucleotide C2498 in 23S rRNA. The polypeptide is Ribosomal RNA large subunit methyltransferase M (Yersinia pestis bv. Antiqua (strain Angola)).